The primary structure comprises 89 residues: Small ribosomal subunit protein uS15 (89 aa).

Belongs to the universal ribosomal protein uS15 family. Part of the 30S ribosomal subunit. Forms a bridge to the 50S subunit in the 70S ribosome, contacting the 23S rRNA.

Its function is as follows. One of the primary rRNA binding proteins, it binds directly to 16S rRNA where it helps nucleate assembly of the platform of the 30S subunit by binding and bridging several RNA helices of the 16S rRNA. Forms an intersubunit bridge (bridge B4) with the 23S rRNA of the 50S subunit in the ribosome. This Gluconobacter oxydans (strain 621H) (Gluconobacter suboxydans) protein is Small ribosomal subunit protein uS15.